The chain runs to 95 residues: Aspartyl/glutamyl-tRNA(Asn/Gln) amidotransferase subunit C (95 aa).

The protein belongs to the GatC family. Heterotrimer of A, B and C subunits.

The catalysed reaction is L-glutamyl-tRNA(Gln) + L-glutamine + ATP + H2O = L-glutaminyl-tRNA(Gln) + L-glutamate + ADP + phosphate + H(+). It carries out the reaction L-aspartyl-tRNA(Asn) + L-glutamine + ATP + H2O = L-asparaginyl-tRNA(Asn) + L-glutamate + ADP + phosphate + 2 H(+). Allows the formation of correctly charged Asn-tRNA(Asn) or Gln-tRNA(Gln) through the transamidation of misacylated Asp-tRNA(Asn) or Glu-tRNA(Gln) in organisms which lack either or both of asparaginyl-tRNA or glutaminyl-tRNA synthetases. The reaction takes place in the presence of glutamine and ATP through an activated phospho-Asp-tRNA(Asn) or phospho-Glu-tRNA(Gln). In Rhodospirillum centenum (strain ATCC 51521 / SW), this protein is Aspartyl/glutamyl-tRNA(Asn/Gln) amidotransferase subunit C.